The following is a 583-amino-acid chain: R-linalool synthase QH5, chloroplastic (583 aa).

A chloroplast-targeting transit peptide spans 1 to 40 (MASISLFPYSILKQTSPLARGTAYNRIYSTKTTGITVDVA). 5 residues coordinate (2E)-geranyl diphosphate: Arg298, Asp335, Asp339, Arg476, and Asp479. Residues Asp335 and Asp339 each coordinate Mg(2+). The DDXXD motif motif lies at 335 to 339 (DDVYD). Positions 479, 483, and 487 each coordinate Mg(2+). Asp492 contacts K(+).

This sequence belongs to the terpene synthase family. Tpsb subfamily. Mg(2+) is required as a cofactor. Requires Mn(2+) as cofactor. K(+) serves as cofactor. Expressed in every aerial organ except for the stem stele of mature plants. Not detected in roots.

It localises to the plastid. It is found in the chloroplast. The catalysed reaction is (2E)-geranyl diphosphate + H2O = (R)-linalool + diphosphate. Its pathway is secondary metabolite biosynthesis; terpenoid biosynthesis. Its function is as follows. Monoterpene synthase that catalyzes the formation of (3R)-linalool from geranyl diphosphate, but not from isopentenyl diphosphate, dimethylallyl diphosphate, chrysanthemyl diphosphate, farnesyl diphosphate, (+)-copalyl diphosphate or geranylgeranyl diphosphate. This is R-linalool synthase QH5, chloroplastic from Artemisia annua (Sweet wormwood).